The primary structure comprises 220 residues: Probable nicotinate-nucleotide adenylyltransferase (220 aa).

It belongs to the NadD family.

It catalyses the reaction nicotinate beta-D-ribonucleotide + ATP + H(+) = deamido-NAD(+) + diphosphate. The protein operates within cofactor biosynthesis; NAD(+) biosynthesis; deamido-NAD(+) from nicotinate D-ribonucleotide: step 1/1. Its function is as follows. Catalyzes the reversible adenylation of nicotinate mononucleotide (NaMN) to nicotinic acid adenine dinucleotide (NaAD). This chain is Probable nicotinate-nucleotide adenylyltransferase, found in Yersinia enterocolitica serotype O:8 / biotype 1B (strain NCTC 13174 / 8081).